The following is a 24-amino-acid chain: Brevinin-1Ecb (24 aa).

A disulfide bridge connects residues Cys18 and Cys24.

In terms of tissue distribution, expressed by the skin glands.

The protein resides in the secreted. Functionally, shows antibacterial activity against representative Gram-negative and Gram-positive bacterial species, and hemolytic activity. The sequence is that of Brevinin-1Ecb from Pelophylax ridibundus (Marsh frog).